Consider the following 286-residue polypeptide: Probable protein VP2 (286 aa).

2 disordered regions span residues 67–108 and 184–286; these read LPAA…GPED and QAAR…GGGI. Residues 222–241 are compositionally biased toward basic residues; the sequence is GKTRSRRKAGRKAQRKRRRP. The span at 242–265 shows a compositional bias: low complexity; sequence SPSSSSSSCSNSESWESNSDSCST.

In terms of processing, phosphorylated at C-terminal serines.

In Homo sapiens (Human), this protein is Probable protein VP2.